A 417-amino-acid polypeptide reads, in one-letter code: Prostaglandin E2 receptor EP3 subtype (417 aa).

Residues 1 to 52 (MKATRDHASAPFCTRFNHSDPGIWAAERAVEAPNNLTLPPEPSEDCGSVSVA) lie on the Extracellular side of the membrane. Residues Asn17 and Asn35 are each glycosylated (N-linked (GlcNAc...) asparagine). The chain crosses the membrane as a helical span at residues 53–77 (FSMTMMITGFVGNALAITLVSKSYR). The Cytoplasmic portion of the chain corresponds to 78-90 (RREGKRKKSFLLC). The helical transmembrane segment at 91-111 (IGWLALTDMVGQLLTSPVVIV) threads the bilayer. At 112 to 130 (LYLSHQRWEQLDPSGRLCT) the chain is on the extracellular side. The chain crosses the membrane as a helical span at residues 131–152 (FFGLTMTVFGLSSLFIASAMAV). At 153 to 174 (ERALATRAPHWYSSHMKTSVTR) the chain is on the cytoplasmic side. Residues 175-196 (AVLLGVWLAVLAFALLPVLGVG) traverse the membrane as a helical segment. Residues 197–226 (QYTIQWPGTWCFISTGPGGNGTNSRQNWGN) are Extracellular-facing. N-linked (GlcNAc...) asparagine glycosylation occurs at Asn216. Residues 227-252 (VFFASAFAILGLSALVVTFACNLATI) traverse the membrane as a helical segment. Residues 253 to 282 (KALVSRCRAKATASQSSAQWGRITTETAIQ) are Cytoplasmic-facing. The chain crosses the membrane as a helical span at residues 283-306 (LMGIMCVLSVCWSPLLIMMLKMIF). A glycan (N-linked (GlcNAc...) asparagine) is linked at Asn307. Residues 307–326 (NHTSVEHCKTYTENQDECNF) are Extracellular-facing. Residues 327-348 (FLIAVRLASLNQILDPWVYLLL) form a helical membrane-spanning segment. The Cytoplasmic portion of the chain corresponds to 349–417 (RKILLQKFCQ…HIYLHTLEHQ (69 aa)).

It belongs to the G-protein coupled receptor 1 family. Interacts (via C-terminus) with MKLN1.

The protein resides in the cell membrane. Its function is as follows. Receptor for prostaglandin E2 (PGE2). The various isoforms have identical ligand binding properties but interact with different second messenger systems: isoform EP3A couples to G(i)/G(o) proteins; isoform EP3B and isoform EP3C couple to G(s), and isoform EP3D couples to G(i), G(s) and G(p). Required for normal development of fever in response to pyrinogens, including IL1B, prostaglandin E2 and bacterial lipopolysaccharide (LPS). Required for normal potentiation of platelet aggregation by prostaglandin E2, and thus plays a role in the regulation of blood coagulation. Required for increased HCO3(-) secretion in the duodenum in response to mucosal acidification, and thereby contributes to the protection of the mucosa against acid-induced ulceration. Not required for normal kidney function, normal urine volume and osmolality. The sequence is that of Prostaglandin E2 receptor EP3 subtype (PTGER3) from Bos taurus (Bovine).